Here is a 1196-residue protein sequence, read N- to C-terminus: RNA-dependent RNA polymerase 6 (1196 aa).

This sequence belongs to the RdRP family. As to quaternary structure, interacts with SGS3. Widely expressed.

Its subcellular location is the cytoplasmic granule. It is found in the nucleus. The catalysed reaction is RNA(n) + a ribonucleoside 5'-triphosphate = RNA(n+1) + diphosphate. Functionally, RNA-dependent RNA polymerase involved in post-transcriptional gene silencing (PTGS). Possesses ssRNA and ssDNA-dependent polymerase activity, but does not have priming activity. Possesses in vitro 3' nucleotidyltransferase activity in the presence of UTP as single nucleotide. Required for the production of 21 nucleotide trans-acting small interfering RNAs (ta-siRNAs) derived from TAS1, TAS2 and TAS3 endogenous transcripts. Acts in the RDR6/SGS3/DCL4/AGO7 ta-siRNA pathway involved in leaf developmental timing. Required for the production of natural siRNAs (nat-siRNAs) derived from cis-natural antisense transcripts. Required for the production of 24 nucleotide nat-siRNAs derived from the stress-related P5CDH-SRO5 antisense gene pair. Required for PTGS induced by transgene direct repeats. Plays an essential role in transitive silencing of transgenes by processing secondary siRNAs. This pathway, which requires DCL2 and DCL4, amplifies silencing by using the target RNA as substrate to generate secondary siRNAs, providing an efficient mechanism for long-distance silencing. Involved in the biogenesis of secondary siRNAs which require 22 nucleotide miRNAs associated to AGO1. Participates synergistically with AS1 and AS2 to proper plant development by repressing the miR165 and miR166 microRNAs (independently of AGO10) that may lead to mRNA degradation of genes in the class III HD-ZIP family. Required for the production of some small RNAs derived from the crucifer-infecting tobamovirus (TMV-cg). Required for sense virus-induced post-transcriptional gene silencing (S-PTGS). This chain is RNA-dependent RNA polymerase 6 (RDR6), found in Arabidopsis thaliana (Mouse-ear cress).